The following is an 828-amino-acid chain: DNA gyrase subunit A (828 aa).

Positions 32–497 (LPDVRDGLKP…EVLSLEDEDL (466 aa)) constitute a Topo IIA-type catalytic domain. The active-site O-(5'-phospho-DNA)-tyrosine intermediate is the tyrosine 120. The GyrA-box motif lies at 524–530 (QKRGGRG).

Belongs to the type II topoisomerase GyrA/ParC subunit family. In terms of assembly, heterotetramer, composed of two GyrA and two GyrB chains. In the heterotetramer, GyrA contains the active site tyrosine that forms a transient covalent intermediate with DNA, while GyrB binds cofactors and catalyzes ATP hydrolysis.

The protein localises to the cytoplasm. The enzyme catalyses ATP-dependent breakage, passage and rejoining of double-stranded DNA.. A type II topoisomerase that negatively supercoils closed circular double-stranded (ds) DNA in an ATP-dependent manner to modulate DNA topology and maintain chromosomes in an underwound state. Negative supercoiling favors strand separation, and DNA replication, transcription, recombination and repair, all of which involve strand separation. Also able to catalyze the interconversion of other topological isomers of dsDNA rings, including catenanes and knotted rings. Type II topoisomerases break and join 2 DNA strands simultaneously in an ATP-dependent manner. The chain is DNA gyrase subunit A from Streptococcus pyogenes serotype M3 (strain ATCC BAA-595 / MGAS315).